Reading from the N-terminus, the 601-residue chain is Arginine--tRNA ligase (601 aa).

Positions 135-145 match the 'HIGH' region motif; the sequence is ANPTGPLHLGH.

Belongs to the class-I aminoacyl-tRNA synthetase family. In terms of assembly, monomer.

The protein resides in the cytoplasm. It catalyses the reaction tRNA(Arg) + L-arginine + ATP = L-arginyl-tRNA(Arg) + AMP + diphosphate. This chain is Arginine--tRNA ligase, found in Gloeobacter violaceus (strain ATCC 29082 / PCC 7421).